Here is a 45-residue protein sequence, read N- to C-terminus: MCDKPDLSEVEKFDKKKLKKTNTEEKNTLPSKETIEQEKECVKSS.

The segment at 19–45 is disordered; it reads KKTNTEEKNTLPSKETIEQEKECVKSS. Basic and acidic residues predominate over residues 21 to 45; that stretch reads TNTEEKNTLPSKETIEQEKECVKSS.

It belongs to the thymosin beta family.

It is found in the cytoplasm. The protein localises to the cytoskeleton. Plays an important role in the organization of the cytoskeleton. Binds to and sequesters actin monomers (G actin) and therefore inhibits actin polymerization. In Coturnix japonica (Japanese quail), this protein is Thymosin beta-15A homolog.